The chain runs to 215 residues: Large ribosomal subunit protein uL3c (215 aa).

A disordered region spans residues 132–151; that stretch reads RGAMSHGSKSHRRPGSIGAG.

It belongs to the universal ribosomal protein uL3 family. As to quaternary structure, part of the 50S ribosomal subunit.

The protein resides in the plastid. The protein localises to the chloroplast. One of the primary rRNA binding proteins, it binds directly near the 3'-end of the 23S rRNA, where it nucleates assembly of the 50S subunit. The chain is Large ribosomal subunit protein uL3c (rpl3) from Cyanidium caldarium (Red alga).